Reading from the N-terminus, the 122-residue chain is Large ribosomal subunit protein uL14 (122 aa).

The protein belongs to the universal ribosomal protein uL14 family. As to quaternary structure, part of the 50S ribosomal subunit. Forms a cluster with proteins L3 and L19. In the 70S ribosome, L14 and L19 interact and together make contacts with the 16S rRNA in bridges B5 and B8.

Its function is as follows. Binds to 23S rRNA. Forms part of two intersubunit bridges in the 70S ribosome. The polypeptide is Large ribosomal subunit protein uL14 (Rhodospirillum centenum (strain ATCC 51521 / SW)).